Consider the following 460-residue polypeptide: Hydroxymethylglutaryl-CoA synthase erg13B (460 aa).

The Proton donor/acceptor role is filled by Glu86. Residue Cys120 is the Acyl-thioester intermediate of the active site. Cys120, Thr162, Ser212, His263, Lys272, Asn340, and Ser374 together coordinate (3S)-3-hydroxy-3-methylglutaryl-CoA. The active-site Proton donor/acceptor is His263.

It belongs to the thiolase-like superfamily. HMG-CoA synthase family.

The enzyme catalyses acetoacetyl-CoA + acetyl-CoA + H2O = (3S)-3-hydroxy-3-methylglutaryl-CoA + CoA + H(+). The protein operates within metabolic intermediate biosynthesis; (R)-mevalonate biosynthesis; (R)-mevalonate from acetyl-CoA: step 2/3. Its function is as follows. Hydroxymethylglutaryl-CoA synthase; part of the first module of ergosterol biosynthesis pathway that includes the early steps of the pathway, conserved across all eukaryotes, and which results in the formation of mevalonate from acetyl-coenzyme A (acetyl-CoA). Erg13A and erg13B condense acetyl-CoA with acetoacetyl-CoA to form hydroxymethylglutaryl-CoA (HMG-CoA). The first module starts with the action of the cytosolic acetyl-CoA acetyltransferase erg10B that catalyzes the formation of acetoacetyl-CoA. The hydroxymethylglutaryl-CoA synthases erg13A and erg13B then condense acetyl-CoA with acetoacetyl-CoA to form HMG-CoA. The rate-limiting step of the early module is the reduction to mevalonate by the 3-hydroxy-3-methylglutaryl-coenzyme A (HMG-CoA) reductases hmg1 and hmg2. Mevalonate is also a precursor for the extracellular siderophore triacetylfusarinine C (TAFC). The polypeptide is Hydroxymethylglutaryl-CoA synthase erg13B (Aspergillus fumigatus (strain ATCC MYA-4609 / CBS 101355 / FGSC A1100 / Af293) (Neosartorya fumigata)).